The sequence spans 138 residues: MAEKLKVELVTPYKKVLSEEVDEITATGALGEFGVLPGHAPFLTSLKIGELAYRKDGVSHHMALNWGYFEVENDTVTVLVETAEKADEIDLERAKAALGRAETELKGLTPEDKNFRIYEAALERALIRVQVAGKAARR.

It belongs to the ATPase epsilon chain family. F-type ATPases have 2 components, CF(1) - the catalytic core - and CF(0) - the membrane proton channel. CF(1) has five subunits: alpha(3), beta(3), gamma(1), delta(1), epsilon(1). CF(0) has three main subunits: a, b and c.

The protein localises to the cell inner membrane. Its function is as follows. Produces ATP from ADP in the presence of a proton gradient across the membrane. This is ATP synthase epsilon chain from Citrifermentans bemidjiense (strain ATCC BAA-1014 / DSM 16622 / JCM 12645 / Bem) (Geobacter bemidjiensis).